The primary structure comprises 247 residues: Coproheme decarboxylase (247 aa).

Residues Arg-129, 143–147 (YPMDK), His-170, Gln-183, and Ser-221 each bind Fe-coproporphyrin III. Residue Tyr-143 is part of the active site.

The protein belongs to the ChdC family. Type 1 subfamily. Requires Fe-coproporphyrin III as cofactor.

It catalyses the reaction Fe-coproporphyrin III + 2 H2O2 + 2 H(+) = heme b + 2 CO2 + 4 H2O. The enzyme catalyses Fe-coproporphyrin III + H2O2 + H(+) = harderoheme III + CO2 + 2 H2O. The catalysed reaction is harderoheme III + H2O2 + H(+) = heme b + CO2 + 2 H2O. It functions in the pathway porphyrin-containing compound metabolism; protoheme biosynthesis. In terms of biological role, involved in coproporphyrin-dependent heme b biosynthesis. Catalyzes the decarboxylation of Fe-coproporphyrin III (coproheme) to heme b (protoheme IX), the last step of the pathway. The reaction occurs in a stepwise manner with a three-propionate intermediate. This chain is Coproheme decarboxylase, found in Bacillus cereus (strain B4264).